Consider the following 130-residue polypeptide: Small ribosomal subunit protein uS8A (130 aa).

Belongs to the universal ribosomal protein uS8 family.

The sequence is that of Small ribosomal subunit protein uS8A (RpS15Aa) from Drosophila melanogaster (Fruit fly).